A 389-amino-acid chain; its full sequence is Stilbene synthase 1 (389 aa).

55 to 58 lines the substrate pocket; it reads KFQR. Residue C164 is part of the active site. Residues L267 and 305–307 contribute to the substrate site; that span reads GGR.

The protein belongs to the thiolase-like superfamily. Chalcone/stilbene synthases family. In terms of assembly, homodimer.

Its subcellular location is the cytoplasm. It carries out the reaction 4-coumaroyl-CoA + 3 malonyl-CoA + 3 H(+) = trans-resveratrol + 4 CO2 + 4 CoA. It functions in the pathway phytoalexin biosynthesis; 3,4',5-trihydroxystilbene biosynthesis; 3,4',5-trihydroxystilbene from trans-4-coumarate: step 2/2. This is Stilbene synthase 1 from Arachis hypogaea (Peanut).